We begin with the raw amino-acid sequence, 1670 residues long: DNA-directed RNA polymerase I subunit 1 (1670 aa).

Positions 79, 82, 89, 92, 119, and 122 each coordinate Zn(2+). Positions 154–185 (ESNTPTKSKSSDESCESVVTTDSSEECEDSDV) are disordered. The span at 176–185 (SSEECEDSDV) shows a compositional bias: acidic residues. Zn(2+) is bound by residues Cys213 and Cys216. Residues 255 to 293 (TSSVENPDGFDDSGIDALSEVEDGDKETREKSTEVAAEF) are disordered. Over residues 262-279 (DGFDDSGIDALSEVEDGD) the composition is skewed to acidic residues. Over residues 280-293 (KETREKSTEVAAEF) the composition is skewed to basic and acidic residues. Residues Asp602, Asp604, and Asp606 each contribute to the Mg(2+) site. A bridging helix region spans residues 1005-1017 (PQEYYFHCMAGRE). A disordered region spans residues 1318–1437 (TGPIAGNETD…EQSKKKRRKF (120 aa)). 3 stretches are compositionally biased toward acidic residues: residues 1339 to 1354 (DDGD…DDLG), 1366 to 1379 (DEMD…DETN), and 1388 to 1399 (EDPEMDSENEDT). Residues 1415–1429 (EPQKEVKGVKNVKEQ) show a composition bias toward basic and acidic residues.

The protein belongs to the RNA polymerase beta' chain family. As to quaternary structure, component of the RNA polymerase I (Pol I) complex consisting of at least 13 subunits.

Its subcellular location is the nucleus. It carries out the reaction RNA(n) + a ribonucleoside 5'-triphosphate = RNA(n+1) + diphosphate. DNA-dependent RNA polymerase catalyzes the transcription of DNA into RNA using the four ribonucleoside triphosphates as substrates. Largest and catalytic core component of RNA polymerase I which synthesizes ribosomal RNA precursors. Forms the polymerase active center together with the second largest subunit. A single stranded DNA template strand of the promoter is positioned within the central active site cleft of Pol I. A bridging helix emanates from NRPA1 and crosses the cleft near the catalytic site and is thought to promote translocation of Pol I by acting as a ratchet that moves the RNA-DNA hybrid through the active site by switching from straight to bent conformations at each step of nucleotide addition. This Arabidopsis thaliana (Mouse-ear cress) protein is DNA-directed RNA polymerase I subunit 1.